A 256-amino-acid chain; its full sequence is GDSL esterase/lipase At1g18120 (256 aa).

Residues 1-49 form the signal peptide; sequence MYRVYKNNKFILISIPRITNKLWQKNCNLVILLGVLLVLTLFHDPIIVA. The active-site Nucleophile is serine 67. N-linked (GlcNAc...) asparagine glycosylation occurs at asparagine 181.

The protein belongs to the 'GDSL' lipolytic enzyme family.

It is found in the secreted. The protein is GDSL esterase/lipase At1g18120 of Arabidopsis thaliana (Mouse-ear cress).